An 81-amino-acid polypeptide reads, in one-letter code: Putative membrane protein insertion efficiency factor (81 aa).

It belongs to the UPF0161 family.

Its subcellular location is the cell inner membrane. Functionally, could be involved in insertion of integral membrane proteins into the membrane. This is Putative membrane protein insertion efficiency factor from Thermotoga maritima (strain ATCC 43589 / DSM 3109 / JCM 10099 / NBRC 100826 / MSB8).